The following is a 110-amino-acid chain: UPF0145 protein (110 aa).

This sequence belongs to the UPF0145 family.

This Listeria ivanovii protein is UPF0145 protein.